The primary structure comprises 225 residues: Reticulon-like protein B9 (225 aa).

Positions 39–224 constitute a Reticulon domain; sequence VADILLWREP…PRGTVKNKKF (186 aa). 3 helical membrane-spanning segments follow: residues 50–70, 72–92, and 152–172; these read IAATLVIGVSILWFLMEVVEY, FITLICHASMTSMLFFFIWST, and YIVSIIGTYFNFVNLLFIGFV.

Its subcellular location is the endoplasmic reticulum membrane. The polypeptide is Reticulon-like protein B9 (RTNLB9) (Arabidopsis thaliana (Mouse-ear cress)).